Reading from the N-terminus, the 719-residue chain is Protein psiJ (719 aa).

Residues 1-21 form the signal peptide; that stretch reads MVSNLLKGLILFSLFISFLNG. Over 22–653 the chain is Extracellular; that stretch reads DDKIFPVTIR…RCQSVAVKAG (632 aa). Residues asparagine 46, asparagine 59, asparagine 86, asparagine 113, asparagine 301, asparagine 372, asparagine 435, asparagine 457, asparagine 562, and asparagine 628 are each glycosylated (N-linked (GlcNAc...) asparagine). One can recognise a PA14 domain in the interval 112 to 260; sequence QNQTDPRVFY…KDYCGVCEGT (149 aa). Residues 654-674 traverse the membrane as a helical segment; it reads VIGGAAIAGVVVGGAVALGLA. Over 675 to 719 the chain is Cytoplasmic; that stretch reads LFGAKAGYNHWMSLKNNQMATSSVNPLYEPSPHQGTNPLWEAPPT.

It belongs to the prespore-cell-inducing factor family.

The protein resides in the membrane. The polypeptide is Protein psiJ (psiJ) (Dictyostelium discoideum (Social amoeba)).